Reading from the N-terminus, the 302-residue chain is 4-hydroxy-tetrahydrodipicolinate synthase (302 aa).

A pyruvate-binding site is contributed by Thr55. The active-site Proton donor/acceptor is the Tyr144. Residue Lys172 is the Schiff-base intermediate with substrate of the active site. Residue Val214 participates in pyruvate binding.

It belongs to the DapA family. Homotetramer; dimer of dimers.

The protein localises to the cytoplasm. The catalysed reaction is L-aspartate 4-semialdehyde + pyruvate = (2S,4S)-4-hydroxy-2,3,4,5-tetrahydrodipicolinate + H2O + H(+). It functions in the pathway amino-acid biosynthesis; L-lysine biosynthesis via DAP pathway; (S)-tetrahydrodipicolinate from L-aspartate: step 3/4. In terms of biological role, catalyzes the condensation of (S)-aspartate-beta-semialdehyde [(S)-ASA] and pyruvate to 4-hydroxy-tetrahydrodipicolinate (HTPA). In Prochlorococcus marinus (strain SARG / CCMP1375 / SS120), this protein is 4-hydroxy-tetrahydrodipicolinate synthase.